Consider the following 374-residue polypeptide: Fasciclin-like arabinogalactan protein CTB11 (374 aa).

The N-terminal stretch at Met-1–Ala-18 is a signal peptide. 2 consecutive FAS1 domains span residues Gln-19–Met-171 and Leu-173–Leu-302. N-linked (GlcNAc...) asparagine glycans are attached at residues Asn-52, Asn-72, Asn-120, Asn-132, and Asn-176. A helical transmembrane segment spans residues Ile-328–Leu-348.

This sequence belongs to the fasciclin-like AGP family.

The protein resides in the membrane. Its pathway is mycotoxin biosynthesis. Functionally, fasciclin-like arabinogalactan protein; part of the gene cluster that mediates the biosynthesis of cercosporin, a light-activated, non-host-selective toxin. The perylenequinone chromophore of cercosporin absorbs light energy to attain an electronically-activated triplet state and produces active oxygen species such as the hydroxyl radical, superoxide, hydrogen peroxide or singlet oxygen upon reaction with oxygen molecules. These reactive oxygen species cause damage to various cellular components including lipids, proteins and nucleic acids. The first step of cercosporin biosynthesis is performed by the polyketide synthase CTB1 which catalyzes the formation of nor-toralactone. The starter unit acyltransferase (SAT) domain of CTB1 initiates polyketide extension by the selective utilization of acetyl-CoA, which is elongated to the heptaketide in the beta-ketoacyl synthase (KS) domain by successive condensations with six malonyl units introduced by the malonyl acyltransferase (MAT) domain. The product template (PT) domain catalyzes C4-C9 and C2-C11 aldol cyclizations and dehydrations to a trihydroxynaphthalene, which is thought to be delivered to the thioesterase (TE) domain for product release. The bifunctional enzyme CTB3 then methylates nor-toralactone to toralactone before conducting an unusual oxidative aromatic ring opening. The O-methyltransferase CTB2 further methylates the nascent OH-6 of the CBT3 product, blocking further oxidation at this site before the reductase CTB6 reduces the 2-oxopropyl ketone at position C7, giving naphthalene. The FAD-dependent monooxygenase CTB5 in concert with the multicopper oxidase CTB12 are responsible for homodimerization of naphthalene with CTB7 installing the dioxepine moiety, finally producing cercosporin. The fasciclin domain-containing protein CTB11 might act with CTB5 and CTB12 whereas the roles of CTB9 and CTB10 have still to be elucidated. This is Fasciclin-like arabinogalactan protein CTB11 from Cercospora beticola (Sugarbeet leaf spot fungus).